The chain runs to 305 residues: Methionyl-tRNA formyltransferase (305 aa).

A (6S)-5,6,7,8-tetrahydrofolate-binding site is contributed by 111 to 114 (SLLP).

It belongs to the Fmt family.

The enzyme catalyses L-methionyl-tRNA(fMet) + (6R)-10-formyltetrahydrofolate = N-formyl-L-methionyl-tRNA(fMet) + (6S)-5,6,7,8-tetrahydrofolate + H(+). In terms of biological role, attaches a formyl group to the free amino group of methionyl-tRNA(fMet). The formyl group appears to play a dual role in the initiator identity of N-formylmethionyl-tRNA by promoting its recognition by IF2 and preventing the misappropriation of this tRNA by the elongation apparatus. The chain is Methionyl-tRNA formyltransferase from Campylobacter jejuni subsp. doylei (strain ATCC BAA-1458 / RM4099 / 269.97).